We begin with the raw amino-acid sequence, 399 residues long: Probable aspartate/prephenate aminotransferase (399 aa).

L-aspartate contacts are provided by Gly39, Trp125, and Asn175. At Lys239 the chain carries N6-(pyridoxal phosphate)lysine. Arg375 is a binding site for L-aspartate.

It belongs to the class-I pyridoxal-phosphate-dependent aminotransferase family. Homodimer. Pyridoxal 5'-phosphate is required as a cofactor.

The protein localises to the cytoplasm. The catalysed reaction is L-aspartate + 2-oxoglutarate = oxaloacetate + L-glutamate. It carries out the reaction L-arogenate + 2-oxoglutarate = prephenate + L-glutamate. Its function is as follows. Catalyzes the reversible conversion of aspartate and 2-oxoglutarate to glutamate and oxaloacetate. Can also transaminate prephenate in the presence of glutamate. This Rickettsia typhi (strain ATCC VR-144 / Wilmington) protein is Probable aspartate/prephenate aminotransferase (aatA).